Reading from the N-terminus, the 508-residue chain is Acetyl-coenzyme A carboxylase carboxyl transferase subunit beta, chloroplastic (508 aa).

Disordered stretches follow at residues 30-51 (PIENASESKDPNRNDTDKNIQG) and 173-234 (NSSN…SSTH). Residues 35 to 47 (SESKDPNRNDTDK) are compositionally biased toward basic and acidic residues. Residues 173–219 (NSSNNNSSNENSSNENSSNENSSNENSSNDYISSSISSQSENSSQNE) show a composition bias toward low complexity. Positions 220–234 (DITTSDQTIPESSTH) are enriched in polar residues. The CoA carboxyltransferase N-terminal domain occupies 244-508 (LWVQCENCYG…LHTFFPLNQN (265 aa)). Cys248, Cys251, Cys267, and Cys270 together coordinate Zn(2+). The C4-type zinc-finger motif lies at 248 to 270 (CENCYGLNYKKFFKSKMHLCEQC).

Belongs to the AccD/PCCB family. As to quaternary structure, acetyl-CoA carboxylase is a heterohexamer composed of biotin carboxyl carrier protein, biotin carboxylase and 2 subunits each of ACCase subunit alpha and ACCase plastid-coded subunit beta (accD). It depends on Zn(2+) as a cofactor.

It localises to the plastid. The protein resides in the chloroplast stroma. It catalyses the reaction N(6)-carboxybiotinyl-L-lysyl-[protein] + acetyl-CoA = N(6)-biotinyl-L-lysyl-[protein] + malonyl-CoA. It functions in the pathway lipid metabolism; malonyl-CoA biosynthesis; malonyl-CoA from acetyl-CoA: step 1/1. Component of the acetyl coenzyme A carboxylase (ACC) complex. Biotin carboxylase (BC) catalyzes the carboxylation of biotin on its carrier protein (BCCP) and then the CO(2) group is transferred by the transcarboxylase to acetyl-CoA to form malonyl-CoA. The polypeptide is Acetyl-coenzyme A carboxylase carboxyl transferase subunit beta, chloroplastic (Lactuca sativa (Garden lettuce)).